The following is a 136-amino-acid chain: Protein NrdI (136 aa).

It belongs to the NrdI family.

Its function is as follows. Probably involved in ribonucleotide reductase function. The protein is Protein NrdI of Salmonella agona (strain SL483).